Reading from the N-terminus, the 348-residue chain is Malyl-CoA/beta-methylmalyl-CoA/citramalyl-CoA lyase (348 aa).

Substrate is bound by residues 32 to 33, lysine 40, and arginine 92; that span reads HF. Residues glutamate 157 and aspartate 184 each contribute to the Mg(2+) site. Residues 183 to 184 and leucine 274 contribute to the substrate site; that span reads AD.

The protein belongs to the HpcH/HpaI aldolase family. As to quaternary structure, homohexamer. Dimer of trimers. Requires Mg(2+) as cofactor. Mn(2+) is required as a cofactor.

It catalyses the reaction (S)-malyl-CoA = glyoxylate + acetyl-CoA. The enzyme catalyses (2R,3S)-beta-methylmalyl-CoA = propanoyl-CoA + glyoxylate. The catalysed reaction is (3S)-citramalyl-CoA = pyruvate + acetyl-CoA. Inhibited by oxalate. Functionally, involved in the 3-hydroxypropionate cycle used for autotrophic carbon dioxide fixation, and in the glyoxylate assimilation cycle used to regenerate acetyl-CoA and produce pyruvate as universal precursor for biosynthesis. As a part of the 3-hydroxypropionate cycle, it catalyzes the cleavage of (S)-malyl-CoA to yield acetyl-CoA and glyoxylate. As part of the glyoxylate assimilation cycle, it catalyzes the condensation of glyoxylate with propionyl-CoA to yield (2R,3S)-beta-methylmalyl-CoA, and catalyzes the cleavage of (S)-citramalyl-CoA to yield acetyl-CoA and pyruvate. The polypeptide is Malyl-CoA/beta-methylmalyl-CoA/citramalyl-CoA lyase (mcl) (Chloroflexus aurantiacus).